Reading from the N-terminus, the 236-residue chain is Thymidylate kinase (236 aa).

9–16 serves as a coordination point for ATP; sequence GPEGSGKS.

The protein belongs to the thymidylate kinase family.

The enzyme catalyses dTMP + ATP = dTDP + ADP. Phosphorylation of dTMP to form dTDP in both de novo and salvage pathways of dTTP synthesis. The polypeptide is Thymidylate kinase (Herpetosiphon aurantiacus (strain ATCC 23779 / DSM 785 / 114-95)).